Reading from the N-terminus, the 551-residue chain is Transcription factor 7-like 1-B (551 aa).

The span at 1-11 shows a compositional bias: gly residues; the sequence is MPQLNGGGGDE. Disordered regions lie at residues 1–76, 298–326, and 392–525; these read MPQL…DLES, QEPNGELSPPVNTKSPGPNKKDEDKKPHI, and GWSA…PPSP. A compositionally biased stretch (basic and acidic residues) spans 19–32; the sequence is ISFKDEGEQEDKIS. The span at 46-61 shows a compositional bias: low complexity; the sequence is SSLVSESENNSSSSDS. Positions 63 to 76 are enriched in basic and acidic residues; the sequence is QTERRPQPRADLES. A DNA-binding region (HMG box) is located at residues 326-394; the sequence is IKKPLNAFML…LHSQLYPGWS (69 aa). Over residues 449–468 the composition is skewed to low complexity; that stretch reads SPATPSAALASPAAPAATHS. Positions 469-478 are enriched in polar residues; sequence EQAQPLSLTT. Low complexity predominate over residues 493–505; it reads SSSSSSSSSSSGL.

This sequence belongs to the TCF/LEF family. As to quaternary structure, interacts with ctnnb1.

Its subcellular location is the nucleus. Participates in the Wnt signaling pathway. Probably binds to DNA and acts as a repressor in the absence of ctnnb1, and possibly as an activator in its presence. Regulates anterior-posterior patterning in the neuroectoderm by repressing posterior neural fates. Also required for hindbrain morphogenesis. This Danio rerio (Zebrafish) protein is Transcription factor 7-like 1-B (tcf7l1b).